A 58-amino-acid chain; its full sequence is Large ribosomal subunit protein uL30 (58 aa).

It belongs to the universal ribosomal protein uL30 family. Part of the 50S ribosomal subunit.

In Psychromonas ingrahamii (strain DSM 17664 / CCUG 51855 / 37), this protein is Large ribosomal subunit protein uL30.